The chain runs to 87 residues: Small ribosomal subunit protein bS20 (87 aa).

Residues 1–26 (MANIKSAKKRAIQSEKARKHNASRRS) are disordered.

It belongs to the bacterial ribosomal protein bS20 family.

Its function is as follows. Binds directly to 16S ribosomal RNA. This Escherichia coli O17:K52:H18 (strain UMN026 / ExPEC) protein is Small ribosomal subunit protein bS20.